The following is an 898-amino-acid chain: Serine/threonine-protein kinase PKH3 (898 aa).

The Protein kinase domain maps to 11–293 (FIFKEELGHG…LEQIKRHPYF (283 aa)). Residues 17 to 25 (LGHGSYSTV) and lysine 41 contribute to the ATP site. The active-site Proton acceptor is aspartate 138. Disordered regions lie at residues 435–484 (PPKV…PSTE) and 675–850 (DSKA…EKYS). Over residues 459-468 (PLQTSSIPQK) the composition is skewed to polar residues. Low complexity predominate over residues 469 to 483 (LSTSSASSALSAPST). At serine 696 the chain carries Phosphoserine. Residues 697–721 (IGNNVTTLSYTAKNGSQNNAPQNDN) show a composition bias toward polar residues. Positions 723 to 738 (GEEKPFRIPSSTKDRP) are enriched in basic and acidic residues. Polar residues-rich tracts occupy residues 740–758 (ANSTPSSRHPRVLSSNNAG), 771–782 (SAPSTNTYTNGS), and 789–803 (RPSTNVGNNKHNILT). Phosphoserine is present on serine 753. The segment covering 804 to 817 (SKKQGSSVFSPSSS) has biased composition (low complexity). The span at 818 to 831 (TTKPQIKTTGYRQP) shows a compositional bias: polar residues. Phosphoserine is present on serine 871.

It belongs to the protein kinase superfamily. Ser/Thr protein kinase family.

It catalyses the reaction L-seryl-[protein] + ATP = O-phospho-L-seryl-[protein] + ADP + H(+). It carries out the reaction L-threonyl-[protein] + ATP = O-phospho-L-threonyl-[protein] + ADP + H(+). Its function is as follows. Serine/threonine-protein kinase which may phosphorylate the same targets substrates as PKH1 and PKH2, 2 upstream activators of PKC1. The polypeptide is Serine/threonine-protein kinase PKH3 (PKH3) (Saccharomyces cerevisiae (strain ATCC 204508 / S288c) (Baker's yeast)).